A 689-amino-acid polypeptide reads, in one-letter code: Glycine--tRNA ligase beta subunit (689 aa).

The protein belongs to the class-II aminoacyl-tRNA synthetase family. Tetramer of two alpha and two beta subunits.

It is found in the cytoplasm. It catalyses the reaction tRNA(Gly) + glycine + ATP = glycyl-tRNA(Gly) + AMP + diphosphate. In Escherichia coli O139:H28 (strain E24377A / ETEC), this protein is Glycine--tRNA ligase beta subunit.